Reading from the N-terminus, the 245-residue chain is 1-(5-phosphoribosyl)-5-[(5-phosphoribosylamino)methylideneamino] imidazole-4-carboxamide isomerase (245 aa).

Asp-7 (proton acceptor) is an active-site residue. Asp-129 acts as the Proton donor in catalysis.

This sequence belongs to the HisA/HisF family.

The protein localises to the cytoplasm. It catalyses the reaction 1-(5-phospho-beta-D-ribosyl)-5-[(5-phospho-beta-D-ribosylamino)methylideneamino]imidazole-4-carboxamide = 5-[(5-phospho-1-deoxy-D-ribulos-1-ylimino)methylamino]-1-(5-phospho-beta-D-ribosyl)imidazole-4-carboxamide. It participates in amino-acid biosynthesis; L-histidine biosynthesis; L-histidine from 5-phospho-alpha-D-ribose 1-diphosphate: step 4/9. The protein is 1-(5-phosphoribosyl)-5-[(5-phosphoribosylamino)methylideneamino] imidazole-4-carboxamide isomerase of Shewanella baltica (strain OS155 / ATCC BAA-1091).